Here is a 540-residue protein sequence, read N- to C-terminus: RNA exonuclease 3 (540 aa).

The C3H1-type zinc-finger motif lies at 7-34 (QFKHIVCPFLRTGRKCQSRNCFFSHDFQ). Residues 382–529 (HCALDCELCY…EDAVSALQLV (148 aa)) enclose the Exonuclease domain.

It belongs to the REXO1/REXO3 family.

It is found in the cytoplasm. The protein resides in the nucleus. Its function is as follows. 3' to 5' exoribonuclease required for proper 3' end maturation of MRP RNA and of the U5L snRNA. In Schizosaccharomyces pombe (strain 972 / ATCC 24843) (Fission yeast), this protein is RNA exonuclease 3 (rex3).